Reading from the N-terminus, the 535-residue chain is CTP synthase (535 aa).

An amidoligase domain region spans residues 1–267; it reads MTKYIFVTGG…DQIVCDHLKL (267 aa). Ser13 is a binding site for CTP. Position 13 (Ser13) interacts with UTP. ATP is bound at residue 14-19; it reads SLGKGI. Position 54 (Tyr54) interacts with L-glutamine. Asp71 lines the ATP pocket. 2 residues coordinate Mg(2+): Asp71 and Glu141. CTP contacts are provided by residues 148–150, 188–193, and Lys224; these read DIE and KTKPTQ. Residues 188-193 and Lys224 each bind UTP; that span reads KTKPTQ. Residue 240–242 coordinates ATP; sequence RDA. The Glutamine amidotransferase type-1 domain maps to 292-534; the sequence is KIALVGKYVE…VKASLTNKES (243 aa). Gly354 provides a ligand contact to L-glutamine. Cys381 serves as the catalytic Nucleophile; for glutamine hydrolysis. Residues 382 to 385, Glu405, and Arg462 contribute to the L-glutamine site; that span reads LGMQ. Residues His507 and Glu509 contribute to the active site.

This sequence belongs to the CTP synthase family. In terms of assembly, homotetramer.

The catalysed reaction is UTP + L-glutamine + ATP + H2O = CTP + L-glutamate + ADP + phosphate + 2 H(+). It catalyses the reaction L-glutamine + H2O = L-glutamate + NH4(+). It carries out the reaction UTP + NH4(+) + ATP = CTP + ADP + phosphate + 2 H(+). Its pathway is pyrimidine metabolism; CTP biosynthesis via de novo pathway; CTP from UDP: step 2/2. Allosterically activated by GTP, when glutamine is the substrate; GTP has no effect on the reaction when ammonia is the substrate. The allosteric effector GTP functions by stabilizing the protein conformation that binds the tetrahedral intermediate(s) formed during glutamine hydrolysis. Inhibited by the product CTP, via allosteric rather than competitive inhibition. Functionally, catalyzes the ATP-dependent amination of UTP to CTP with either L-glutamine or ammonia as the source of nitrogen. Regulates intracellular CTP levels through interactions with the four ribonucleotide triphosphates. The protein is CTP synthase of Bacillus anthracis (strain A0248).